The primary structure comprises 84 residues: U8-theraphotoxin-Hhn1d (84 aa).

The N-terminal stretch at methionine 1–cysteine 21 is a signal peptide. Intrachain disulfides connect cysteine 23-cysteine 35, cysteine 29-cysteine 44, cysteine 34-cysteine 67, cysteine 54-cysteine 75, and cysteine 69-cysteine 81.

Belongs to the AVIT (prokineticin) family. Expressed by the venom gland.

Its subcellular location is the secreted. This Cyriopagopus hainanus (Chinese bird spider) protein is U8-theraphotoxin-Hhn1d.